The chain runs to 305 residues: Membrane glycoprotein UL142 (305 aa).

The signal sequence occupies residues 1–19 (MRIEWACWLFGYFVSSVGS). The Lumenal portion of the chain corresponds to 20-270 (ERSLSYRYHL…QKTNNTTSPW (251 aa)). A helical transmembrane segment spans residues 271–288 (VYAIPMGATATIGAGLYI). Over 289-305 (GKHFTPVKFVYEVWRGQ) the chain is Cytoplasmic.

Interacts with host MICA and ULBP3.

Its subcellular location is the host endoplasmic reticulum membrane. It localises to the host Golgi apparatus membrane. Functionally, participates in the inhibition of the host immune response. Prevents host NK cell-mediated lysis of the infected cell by preventing the KLRK1 ligand 3/ULBP3 trafficking to the cell surface. Also retains another KLRK1 ligand, MHC class I-related chain A/MICA, in the Golgi apparatus to avoid its surface expression. The protein is Membrane glycoprotein UL142 (UL142) of Homo sapiens (Human).